The sequence spans 423 residues: Riboflavin biosynthesis protein RibBA (423 aa).

The segment at 1-204 (MTRLDSVERA…IADLIEWRRK (204 aa)) is DHBP synthase. D-ribulose 5-phosphate contacts are provided by residues 28 to 29 (RE), aspartate 33, 141 to 145 (RPGHT), and glutamate 165. Glutamate 29 is a binding site for Mg(2+). Histidine 144 contributes to the Mg(2+) binding site. The segment at 205–423 (HEKHIARVAE…AVPGEFGGAV (219 aa)) is GTP cyclohydrolase II. 259–263 (RVHSE) contributes to the GTP binding site. Residues cysteine 264, cysteine 275, and cysteine 277 each coordinate Zn(2+). GTP-binding positions include glutamine 280, 303–305 (EGR), and threonine 325. Aspartate 337 functions as the Proton acceptor; for GTP cyclohydrolase activity in the catalytic mechanism. Arginine 339 acts as the Nucleophile; for GTP cyclohydrolase activity in catalysis. 2 residues coordinate GTP: threonine 360 and lysine 365.

It in the N-terminal section; belongs to the DHBP synthase family. In the C-terminal section; belongs to the GTP cyclohydrolase II family. The cofactor is Mg(2+). Mn(2+) is required as a cofactor. Requires Zn(2+) as cofactor.

It catalyses the reaction D-ribulose 5-phosphate = (2S)-2-hydroxy-3-oxobutyl phosphate + formate + H(+). The catalysed reaction is GTP + 4 H2O = 2,5-diamino-6-hydroxy-4-(5-phosphoribosylamino)-pyrimidine + formate + 2 phosphate + 3 H(+). The protein operates within cofactor biosynthesis; riboflavin biosynthesis; 2-hydroxy-3-oxobutyl phosphate from D-ribulose 5-phosphate: step 1/1. It participates in cofactor biosynthesis; riboflavin biosynthesis; 5-amino-6-(D-ribitylamino)uracil from GTP: step 1/4. In terms of biological role, catalyzes the conversion of D-ribulose 5-phosphate to formate and 3,4-dihydroxy-2-butanone 4-phosphate. Functionally, catalyzes the conversion of GTP to 2,5-diamino-6-ribosylamino-4(3H)-pyrimidinone 5'-phosphate (DARP), formate and pyrophosphate. This chain is Riboflavin biosynthesis protein RibBA, found in Mycolicibacterium gilvum (strain PYR-GCK) (Mycobacterium gilvum (strain PYR-GCK)).